The sequence spans 218 residues: Monomethylamine corrinoid protein 2 (218 aa).

The B12-binding N-terminal domain occupies 1–91 (MTNTEIFNKL…ELEKTKVEGE (91 aa)). Residues 94–218 (TGLAITFVAE…AAKVALNVMK (125 aa)) enclose the B12-binding domain. Histidine 107 contributes to the methylcob(III)alamin binding site.

Belongs to the methylamine corrinoid protein family. In terms of assembly, can form a complex with MtmB.

It participates in one-carbon metabolism; methanogenesis from methylamine. Functionally, acts as a methyl group carrier between MtmB and MtbA. In Methanosarcina mazei (strain ATCC BAA-159 / DSM 3647 / Goe1 / Go1 / JCM 11833 / OCM 88) (Methanosarcina frisia), this protein is Monomethylamine corrinoid protein 2 (mtmC2).